The primary structure comprises 69 residues: Large ribosomal subunit protein uL29 (69 aa).

Belongs to the universal ribosomal protein uL29 family.

The protein is Large ribosomal subunit protein uL29 of Synechococcus sp. (strain WH7803).